Consider the following 363-residue polypeptide: tRNA(Met) cytidine acetate ligase (363 aa).

Residues 7 to 20, Gly96, Asn152, and Arg175 contribute to the ATP site; that span reads IAEFNPFHNGHKYL.

Belongs to the TmcAL family.

The protein localises to the cytoplasm. The catalysed reaction is cytidine(34) in elongator tRNA(Met) + acetate + ATP = N(4)-acetylcytidine(34) in elongator tRNA(Met) + AMP + diphosphate. Functionally, catalyzes the formation of N(4)-acetylcytidine (ac(4)C) at the wobble position of elongator tRNA(Met), using acetate and ATP as substrates. First activates an acetate ion to form acetyladenylate (Ac-AMP) and then transfers the acetyl group to tRNA to form ac(4)C34. The sequence is that of tRNA(Met) cytidine acetate ligase from Streptococcus thermophilus (strain CNRZ 1066).